The sequence spans 256 residues: Large ribosomal subunit protein bL21c (256 aa).

A chloroplast-targeting transit peptide spans 1–55; that stretch reads MASATLAFSCSSLCATLKLPQNLNPLLLNVPPLSKPFSGVVSPPSLSRLSLLPVA.

Component of the chloroplast large ribosomal subunit (LSU). Mature 70S chloroplast ribosomes of higher plants consist of a small (30S) and a large (50S) subunit. The 30S small subunit contains 1 molecule of ribosomal RNA (16S rRNA) and 24 different proteins. The 50S large subunit contains 3 rRNA molecules (23S, 5S and 4.5S rRNA) and 33 different proteins.

It localises to the plastid. It is found in the chloroplast. Component of the chloroplast ribosome (chloro-ribosome), a dedicated translation machinery responsible for the synthesis of chloroplast genome-encoded proteins, including proteins of the transcription and translation machinery and components of the photosynthetic apparatus. The chain is Large ribosomal subunit protein bL21c (RPL21) from Spinacia oleracea (Spinach).